A 359-amino-acid polypeptide reads, in one-letter code: Peptide chain release factor 1 (359 aa).

Gln238 is subject to N5-methylglutamine.

The protein belongs to the prokaryotic/mitochondrial release factor family. Methylated by PrmC. Methylation increases the termination efficiency of RF1.

The protein resides in the cytoplasm. In terms of biological role, peptide chain release factor 1 directs the termination of translation in response to the peptide chain termination codons UAG and UAA. The polypeptide is Peptide chain release factor 1 (Rhodococcus jostii (strain RHA1)).